The sequence spans 684 residues: Probable potassium transport system protein Kup (684 aa).

12 helical membrane-spanning segments follow: residues 19-39, 61-81, 104-124, 151-171, 177-197, 223-243, 255-275, 303-323, 352-372, 381-401, 407-427, and 433-453; these read ALLV…LYVM, VSLI…LIAL, WLVL…MLTP, QVIW…RFGT, AFGP…FIAL, MGLF…ALYS, LSWP…AVWL, LGAI…LISG, LYIP…IGYF, AYGL…YQYL, PAVV…VFFI, and FLHG…VMYV.

The protein belongs to the HAK/KUP transporter (TC 2.A.72) family.

It is found in the cell membrane. The catalysed reaction is K(+)(in) + H(+)(in) = K(+)(out) + H(+)(out). Transport of potassium into the cell. Likely operates as a K(+):H(+) symporter. The polypeptide is Probable potassium transport system protein Kup (Lacticaseibacillus paracasei (strain ATCC 334 / BCRC 17002 / CCUG 31169 / CIP 107868 / KCTC 3260 / NRRL B-441) (Lactobacillus paracasei)).